A 192-amino-acid polypeptide reads, in one-letter code: UPF0149 protein VIBHAR_03551 (192 aa).

It belongs to the UPF0149 family.

The sequence is that of UPF0149 protein VIBHAR_03551 from Vibrio campbellii (strain ATCC BAA-1116).